A 481-amino-acid chain; its full sequence is Leukocyte immunoglobulin-like receptor subfamily A member 6 (481 aa).

The N-terminal stretch at 1-23 is a signal peptide; sequence MTPALTALLCLGLSLGPRTRVQA. The Extracellular segment spans residues 24–447; it reads GPFPKPTLWA…SHAKDYTVEN (424 aa). Cys49 and Cys98 are oxidised to a cystine. The segment covering 59 to 70 has biased composition (basic and acidic residues); the sequence is QLDKEGSPEPLD. The segment at 59–78 is disordered; it reads QLDKEGSPEPLDRNNPLEPK. Residue Asn139 is glycosylated (N-linked (GlcNAc...) asparagine). Disulfide bonds link Cys144/Cys196 and Cys245/Cys296. 2 Ig-like C2-type domains span residues 225–314 and 323–408; these read PSLL…DPLN and DTVS…HLLS. Asn301 and Asn340 each carry an N-linked (GlcNAc...) asparagine glycan. Residues Cys345 and Cys396 are joined by a disulfide bond. The tract at residues 419–439 is disordered; it reads SGHSGGSSLPPTGPPSTPASH. The chain crosses the membrane as a helical span at residues 448-468; that stretch reads LIRMGMAGLVLVFLGILLFEA. The Cytoplasmic portion of the chain corresponds to 469 to 481; it reads QHSQRNPQDAAGR.

It is found in the membrane. May act as receptor for class I MHC antigens. The protein is Leukocyte immunoglobulin-like receptor subfamily A member 6 (LILRA6) of Homo sapiens (Human).